Consider the following 78-residue polypeptide: Sec-independent protein translocase protein TatA (78 aa).

A helical transmembrane segment spans residues 4 to 21; it reads SFQHILILLVVVLLLFGR. The segment at 49–78 is disordered; that stretch reads TAKSDSIKTIDNTGKPTNVQANPQRQDSTV. Residues 57–78 show a composition bias toward polar residues; sequence TIDNTGKPTNVQANPQRQDSTV.

Belongs to the TatA/E family. In terms of assembly, the Tat system comprises two distinct complexes: a TatABC complex, containing multiple copies of TatA, TatB and TatC subunits, and a separate TatA complex, containing only TatA subunits. Substrates initially bind to the TatABC complex, which probably triggers association of the separate TatA complex to form the active translocon.

Its subcellular location is the cell inner membrane. Part of the twin-arginine translocation (Tat) system that transports large folded proteins containing a characteristic twin-arginine motif in their signal peptide across membranes. TatA could form the protein-conducting channel of the Tat system. In Afipia carboxidovorans (strain ATCC 49405 / DSM 1227 / KCTC 32145 / OM5) (Oligotropha carboxidovorans), this protein is Sec-independent protein translocase protein TatA.